The primary structure comprises 1240 residues: MAYRNVKYGKKVERRNYSKIIYDVDLPNLIEIQNKSFNWFLKDGIEELLQDFCPIESYNGDLKIYFGECYSTGPKYSVEESKTKDASYVIQLFVKATLENTLTGETKKSSVLLTELPLITDTGTFIINGKERVAVSQIVRSSSVYYSSTFDVKLNKNLYSGQVIPARGAWIEYEEGSKEILYVKLDRSKKIPLSNFIYALGFNNREIIEKVFGKSPLLNSSFVKEEDMDTGNALIELYSKIRQGEKVPVDTARDFIRKRLFDQKKYDLTTVGRYKFNKKLDVLARAEKTYLVHDFVNLETKEIILPKHTFLTKDKIEILRKNRHFLLQELFDAQHNLENETDEEILTYKKDPQSRELYIKTNILNFRTGEIIFPKDTLVTDEVIKRLRKSIQLLDGKVIEFFLRSKDVYQKDLERTGVFNEILEVYLSKDEHDNLQHKVQIVGNNQKETKKHITLSDIIASISYYLNLYEGIGNVDDIDHLGNRRLRLIGELLKNQFRIGLTRAEKHIKDMISVSKFSEVGPGELVNFGFLNGVIKTFFANSRLSQFMDQINPLAELTQKRRVSALGVGGINRDRAGVEVRDVHNSHYGRLCPIETPEGPSIGLIASLAIYAKVDDYGFIQTPFFKVFVQNGASYVSNQIEYLTADQEKEEIIASSGYELNSDATFQKDKVIARKNGEIGIYPKEQVTYADISPKQIVSIATASIPFLEHNDSSRALMGSNMQRQAVPLLVTESPIVGTGIEYRAAKDSGSLIIASQPGIVTYVDAKKIVTSDQEGNKKEYQLTTFEKSNQDTLILQKPIVSLGDNIQKGDILVDGPSTNQGELALGRNILVAFMTWEGYNYEDAIIISEELVKNDVYTSVHINKYSVQTRELKKGSGKEEITREVPNVGADAIKNLDERGIIIPGSEVKEGDILVGKITPQGNVDPTPQEKLIQIVIGEKAREYKDSSLRVPYGEGGIVQSVQYFSRKNGDILPPGVNENIRVFIAKKRKISEGDKMAGRHGNKGVISRILPKEDLPFMEDGTTIDVMLNPLGVPSRMNIGQILEIHLGMSAKNLNIKVATPVFDGVNDQDLKEISQEANLELDGKKVLYDGRTGEPYENRISVGVMYMIKLSHMVDDKLHARNVGPYTLVTQQPMRGKIREGGQRYGEMENWAVHAHGAAYTLQEFLTIKSDDIIGRNQTYSAIVQGKQLPKPNIPESFRVLIKELQALGLYVELIKTDTKENEVNKSLIDYKKEGYN.

Belongs to the RNA polymerase beta chain family. In terms of assembly, the RNAP catalytic core consists of 2 alpha, 1 beta, 1 beta' and 1 omega subunit. When a sigma factor is associated with the core the holoenzyme is formed, which can initiate transcription.

The catalysed reaction is RNA(n) + a ribonucleoside 5'-triphosphate = RNA(n+1) + diphosphate. In terms of biological role, DNA-dependent RNA polymerase catalyzes the transcription of DNA into RNA using the four ribonucleoside triphosphates as substrates. This chain is DNA-directed RNA polymerase subunit beta, found in Phytoplasma australiense.